A 158-amino-acid chain; its full sequence is Endoribonuclease YbeY (158 aa).

Residues His119, His123, and His129 each coordinate Zn(2+).

The protein belongs to the endoribonuclease YbeY family. Requires Zn(2+) as cofactor.

Its subcellular location is the cytoplasm. Its function is as follows. Single strand-specific metallo-endoribonuclease involved in late-stage 70S ribosome quality control and in maturation of the 3' terminus of the 16S rRNA. This chain is Endoribonuclease YbeY, found in Acinetobacter baumannii (strain AB307-0294).